We begin with the raw amino-acid sequence, 309 residues long: Probable porphobilinogen deaminase (309 aa).

The residue at position 233 (C233) is an S-(dipyrrolylmethanemethyl)cysteine.

It belongs to the HMBS family. It depends on dipyrromethane as a cofactor.

The catalysed reaction is 4 porphobilinogen + H2O = hydroxymethylbilane + 4 NH4(+). Its pathway is porphyrin-containing compound metabolism; protoporphyrin-IX biosynthesis; coproporphyrinogen-III from 5-aminolevulinate: step 2/4. In terms of biological role, tetrapolymerization of the monopyrrole PBG into the hydroxymethylbilane pre-uroporphyrinogen in several discrete steps. This Methanococcoides burtonii (strain DSM 6242 / NBRC 107633 / OCM 468 / ACE-M) protein is Probable porphobilinogen deaminase.